Consider the following 279-residue polypeptide: Presqualene diphosphate synthase (279 aa).

The protein belongs to the phytoene/squalene synthase family. HpnD subfamily.

It carries out the reaction 2 (2E,6E)-farnesyl diphosphate = presqualene diphosphate + diphosphate. Its pathway is secondary metabolite biosynthesis; hopanoid biosynthesis. In terms of biological role, involved in the biosynthesis of the hopanoid precursor squalene (SQ) from farnesyl diphosphate (FPP). Catalyzes the first step, the formation of presqualene diphosphate (PSPP) from two molecules of FPP. The chain is Presqualene diphosphate synthase from Rhodopseudomonas palustris (strain ATCC BAA-98 / CGA009).